A 1049-amino-acid chain; its full sequence is Retinoblastoma-like protein 1 (1049 aa).

A phosphothreonine mark is found at threonine 332, threonine 369, and threonine 385. The interval 385–584 (TPVASATQSV…WEALRASANK (200 aa)) is domain A. The interval 385-944 (TPVASATQSV…GRVKSFALKY (560 aa)) is pocket; binds T and E1A. The tract at residues 585–779 (VPSCEEVIFP…TQDAPLTGIS (195 aa)) is spacer. Phosphoserine is present on residues serine 640, serine 650, serine 748, and serine 761. A domain B region spans residues 780–944 (KPKRTGSLAL…GRVKSFALKY (165 aa)). Phosphoserine occurs at positions 959, 970, and 983. Threonine 992 bears the Phosphothreonine mark. Serine 1004 and serine 1022 each carry phosphoserine.

This sequence belongs to the retinoblastoma protein (RB) family. As to quaternary structure, component of the DREAM complex (also named LINC complex) at least composed of E2F4, E2F5, LIN9, LIN37, LIN52, LIN54, MYBL1, MYBL2, RBL1, RBL2, RBBP4, TFDP1 and TFDP2. The complex exists in quiescent cells where it represses cell cycle-dependent genes. It dissociates in S phase when LIN9, LIN37, LIN52 and LIN54 form a subcomplex that binds to MYBL2. Interacts with AATF. Interacts with KDM5A. Interacts with KMT5B and KMT5C. Interacts with USP4. Interacts with RBBP9. Cell-cycle arrest properties are inactivated by phosphorylation on Thr-332, Ser-640, Ser-959 and Ser-970 by CDK4.

It localises to the nucleus. Its function is as follows. Key regulator of entry into cell division. Directly involved in heterochromatin formation by maintaining overall chromatin structure and, in particular, that of constitutive heterochromatin by stabilizing histone methylation. Recruits and targets histone methyltransferases KMT5B and KMT5C, leading to epigenetic transcriptional repression. Controls histone H4 'Lys-20' trimethylation. Probably acts as a transcription repressor by recruiting chromatin-modifying enzymes to promoters. Potent inhibitor of E2F-mediated trans-activation. May act as a tumor suppressor. The protein is Retinoblastoma-like protein 1 of Rattus norvegicus (Rat).